A 308-amino-acid chain; its full sequence is Tyrosine recombinase XerD (308 aa).

The 87-residue stretch at 3 to 89 (NGFTRLTEQF…SIHEFHRFAL (87 aa)) folds into the Core-binding (CB) domain. The region spanning 110-301 (TLPDVLTVDE…SPETLIETYL (192 aa)) is the Tyr recombinase domain. Catalysis depends on residues Arg153, Lys177, His253, Arg256, and His279. Tyr288 (O-(3'-phospho-DNA)-tyrosine intermediate) is an active-site residue.

It belongs to the 'phage' integrase family. XerD subfamily. In terms of assembly, forms a cyclic heterotetrameric complex composed of two molecules of XerC and two molecules of XerD.

It localises to the cytoplasm. In terms of biological role, site-specific tyrosine recombinase, which acts by catalyzing the cutting and rejoining of the recombining DNA molecules. The XerC-XerD complex is essential to convert dimers of the bacterial chromosome into monomers to permit their segregation at cell division. It also contributes to the segregational stability of plasmids. The chain is Tyrosine recombinase XerD from Bifidobacterium longum (strain NCC 2705).